A 221-amino-acid chain; its full sequence is Orotidine 5'-phosphate decarboxylase (221 aa).

Residues Asp-12, Lys-34, Asp-60 to Thr-69, Ser-117, Pro-170 to Ser-180, Gly-193, and Arg-194 contribute to the substrate site. Lys-62 (proton donor) is an active-site residue.

This sequence belongs to the OMP decarboxylase family. Type 1 subfamily. In terms of assembly, homodimer.

It carries out the reaction orotidine 5'-phosphate + H(+) = UMP + CO2. It participates in pyrimidine metabolism; UMP biosynthesis via de novo pathway; UMP from orotate: step 2/2. Its function is as follows. Catalyzes the decarboxylation of orotidine 5'-monophosphate (OMP) to uridine 5'-monophosphate (UMP). In Methanosarcina barkeri (strain Fusaro / DSM 804), this protein is Orotidine 5'-phosphate decarboxylase.